Reading from the N-terminus, the 91-residue chain is Large ribosomal subunit protein bL31B (91 aa).

Belongs to the bacterial ribosomal protein bL31 family. Type B subfamily. Part of the 50S ribosomal subunit.

This Neisseria gonorrhoeae (strain ATCC 700825 / FA 1090) protein is Large ribosomal subunit protein bL31B.